The primary structure comprises 1198 residues: Regulator of G-protein signaling 3 (1198 aa).

The C2 domain maps to 137-256; that stretch reads GAGQLRLSID…TPDKEISGWY (120 aa). A PDZ domain is found at 299–376; that stretch reads KITIPRGKDG…EIILLVWRMV (78 aa). Arg-448 is modified (omega-N-methylarginine). The tract at residues 669-933 is disordered; the sequence is QQLAASPPDS…GAEGGLSLRV (265 aa). Residue Ser-674 is modified to Phosphoserine. Residues 679–697 are compositionally biased toward basic and acidic residues; it reads KMFETEADEKREMALEEGK. The span at 739–751 shows a compositional bias: polar residues; it reads EPLSSKDSATSEG. A compositionally biased stretch (pro residues) spans 753 to 773; that stretch reads PPGPDAPPSKDVPPCQEPPPA. Positions 877–906 are enriched in acidic residues; it reads GDEEDAEEAEEVEEGEEGEEDEDEDTSDDN. Over residues 907 to 917 the composition is skewed to basic and acidic residues; it reads YGERSEAKRSS. Residues Ser-943, Ser-946, Ser-978, and Ser-1007 each carry the phosphoserine modification. 2 disordered regions span residues 1007-1026 and 1032-1056; these read SGAD…KSKN and KNKL…ADKM. An RGS domain is found at 1073-1198; it reads SLEKLLVHKY…INQKKMSPPL (126 aa).

In terms of assembly, binds EFNB1 and EFNB2. Binds the GNB1-GNG2 heterodimer. Phosphorylated by cyclic GMP-dependent protein kinase. In terms of processing, ISGylated.

It localises to the cytoplasm. Its subcellular location is the nucleus. The protein resides in the cell membrane. Its function is as follows. Down-regulates signaling from heterotrimeric G-proteins by increasing the GTPase activity of the alpha subunits, thereby driving them into their inactive GDP-bound form. Down-regulates G-protein-mediated release of inositol phosphates and activation of MAP kinases. This Homo sapiens (Human) protein is Regulator of G-protein signaling 3 (RGS3).